Here is a 260-residue protein sequence, read N- to C-terminus: Acetyl-coenzyme A carboxylase carboxyl transferase subunit alpha (260 aa).

In terms of domain architecture, CoA carboxyltransferase C-terminal spans 1-235; that stretch reads MSAYDKVMAA…SNKILHSINK (235 aa).

It belongs to the AccA family. As to quaternary structure, acetyl-CoA carboxylase is a heterohexamer composed of biotin carboxyl carrier protein (AccB), biotin carboxylase (AccC) and two subunits each of ACCase subunit alpha (AccA) and ACCase subunit beta (AccD).

It is found in the cytoplasm. It catalyses the reaction N(6)-carboxybiotinyl-L-lysyl-[protein] + acetyl-CoA = N(6)-biotinyl-L-lysyl-[protein] + malonyl-CoA. It participates in lipid metabolism; malonyl-CoA biosynthesis; malonyl-CoA from acetyl-CoA: step 1/1. In terms of biological role, component of the acetyl coenzyme A carboxylase (ACC) complex. First, biotin carboxylase catalyzes the carboxylation of biotin on its carrier protein (BCCP) and then the CO(2) group is transferred by the carboxyltransferase to acetyl-CoA to form malonyl-CoA. This is Acetyl-coenzyme A carboxylase carboxyl transferase subunit alpha from Ruminiclostridium cellulolyticum (strain ATCC 35319 / DSM 5812 / JCM 6584 / H10) (Clostridium cellulolyticum).